Consider the following 619-residue polypeptide: METVDTTSRLAKLRELMKRERVDVYVVPSEDAHSSEYICAADARRAFISGFTGSAGCAIVTQEKAALSTDGRYFNQAARQLDENWELLKQGLPDVPTWQEWVAQQAEGGKNVGVDATVITAQQAKSLETRIKKKGGTSLLGIPNNLIDEVWGADRPNRPNNPVMVLDEKYSGKEFPLKIEAVRKELENKKSPGFVVSMLDEIAWLFNLRGTDIPYNPVFFSYAFISPESTTLYIDSSKLDEKVIAHLGSAVKIRPYHEIFDEIDLLAQKLKVGQPETDSKASEDGGKWLVSNKTSWALSKALGGDDAIEVIRSPVEEEKAVKNDTEKEGMKRCHIRDGAALTEYFAWLEDELLKGTKIDEVQAADKLEQIRSRGENFMGLSFDTISSTGPNAAVIHYKPEAGNCSVIDPKAIYLCDSGAQYLDGTTDTTRTLHFGEPTDMERKSYTLVLKGMIALDRAIFPKGTSGFALDILARQFLWSEGLDYRHGTGHGVGSFLNVHEGPFGIGTRIQYSEVALSPGMFVSNEPGYYEDGSFGIRIENIIMVKEVKTSHSFGDRPYFGFERVTMVPMCRKLIDAGLLTPAETEWLNSYHAEVFEKTHGFFEKDSLASKWLKRETTPI.

Residues aspartate 416, aspartate 427, glutamate 525, and glutamate 539 each contribute to the Mn(2+) site.

The protein belongs to the peptidase M24B family. It depends on Mn(2+) as a cofactor.

It carries out the reaction Release of any N-terminal amino acid, including proline, that is linked to proline, even from a dipeptide or tripeptide.. In terms of biological role, catalyzes the removal of a penultimate prolyl residue from the N-termini of peptides. The sequence is that of Probable Xaa-Pro aminopeptidase P (AMPP) from Tuber melanosporum (strain Mel28) (Perigord black truffle).